Here is a 247-residue protein sequence, read N- to C-terminus: 2-amino-5-formylamino-6-ribosylaminopyrimidin-4(3H)-one 5'-monophosphate deformylase (247 aa).

Positions 41, 43, 52, and 121 each coordinate Fe cation.

Belongs to the creatininase superfamily. FAPy deformylase family. In terms of assembly, homodimer. Fe(2+) is required as a cofactor. The cofactor is Zn(2+).

It carries out the reaction 2-amino-5-formylamino-6-(5-phospho-D-ribosylamino)pyrimidin-4(3H)-one + H2O = 2,5-diamino-6-(1-D-ribosylamino)pyrimidin-4(3H)-one 5'-phosphate + formate + H(+). It functions in the pathway cofactor biosynthesis; coenzyme F420 biosynthesis. Its pathway is cofactor biosynthesis; riboflavin biosynthesis. Catalyzes the hydrolysis of the formamide of 2-amino-5-formylamino-6-ribosylamino-4(3H)-pyrimidinone 5'-monophosphate (FAPy) to form 2,5-diamino-6-ribosylamino-4(3H)-pyrimidinone 5'-phosphate (APy). The protein is 2-amino-5-formylamino-6-ribosylaminopyrimidin-4(3H)-one 5'-monophosphate deformylase of Methanothermus fervidus (strain ATCC 43054 / DSM 2088 / JCM 10308 / V24 S).